We begin with the raw amino-acid sequence, 455 residues long: MHILVVGLDYKTAPVEIREQLSFEPSELGTAMSKLKEEKSILENIVISTCNRTEIYAVVDQLHTGRFYIKRFLADWFGLEKEDVSPYLKFYENDGAVEHLFRVACGLDSMVIGETQILGQVRSSFKVAQEEKTIGTVFNYLFKQAVTVAKRSHAETDIASNAVSVSYAAVELAKKIFGRLSDKHVLILGAGKMGELAAQNLQGQGIGQVTVINRTYEKAKELAGRFSGEPKSLNQLEKTLSEADILISSTGAKQFVITKEMVESANKKRKGRPLFMVDIAVPRDLDPAISEVEGAFLYDIDDLEGIVAANLKERRAVAEQVELLIEAEIVEFKQWLNTLGVVPVISALREKALTIQADTMQSIERKLPNLTHREMKLLNKHTKSIINQMLKDPILKAKEIAAEPNAEEKLLLFKEIFDLQVEDEEQKVEPVQVEQGSFQLFKPNMAQGFATVASE.

Substrate-binding positions include 49 to 52 (TCNR), S109, 114 to 116 (ETQ), and Q120. The active-site Nucleophile is the C50. 189–194 (GAGKMG) is a binding site for NADP(+).

Belongs to the glutamyl-tRNA reductase family. In terms of assembly, homodimer.

It carries out the reaction (S)-4-amino-5-oxopentanoate + tRNA(Glu) + NADP(+) = L-glutamyl-tRNA(Glu) + NADPH + H(+). The protein operates within porphyrin-containing compound metabolism; protoporphyrin-IX biosynthesis; 5-aminolevulinate from L-glutamyl-tRNA(Glu): step 1/2. Its function is as follows. Catalyzes the NADPH-dependent reduction of glutamyl-tRNA(Glu) to glutamate 1-semialdehyde (GSA). This chain is Glutamyl-tRNA reductase, found in Bacillus pumilus (strain SAFR-032).